We begin with the raw amino-acid sequence, 293 residues long: Probable E3 ubiquitin-protein ligase RNF144A-B (293 aa).

The TRIAD supradomain stretch occupies residues 16–237 (PLLSCKLCLG…YDKGPCRNKL (222 aa)). Zn(2+)-binding residues include Cys-20, Cys-23, Cys-43, Cys-46, Cys-111, Cys-116, Cys-135, Cys-138, Cys-143, Cys-146, His-151, Cys-156, Cys-186, and Cys-189. The segment at 20–70 (CKLCLGEFPLEQMTTISQCQCIFCSLCLKQYVELLIKEGLETAISCPDSAC) adopts an RING-type 1 zinc-finger fold. The segment at 91 to 156 (QHYKRLQFER…RADCHTGQAC (66 aa)) adopts an IBR-type zinc-finger fold. Residues 186–215 (CPKCKVYIERDEGCAQMMCKNCKHAFCWYC) form an RING-type 2; atypical zinc finger. Cys-199 is an active-site residue. Cys-204, Cys-207, Cys-212, Cys-215, His-227, and Cys-233 together coordinate Zn(2+). The helical transmembrane segment at 251–271 (VVGIFAGFGLLLLVASPFLLL) threads the bilayer.

This sequence belongs to the RBR family. RNF144 subfamily.

The protein localises to the membrane. It catalyses the reaction [E2 ubiquitin-conjugating enzyme]-S-ubiquitinyl-L-cysteine + [acceptor protein]-L-lysine = [E2 ubiquitin-conjugating enzyme]-L-cysteine + [acceptor protein]-N(6)-ubiquitinyl-L-lysine.. It participates in protein modification; protein ubiquitination. Functionally, E3 ubiquitin-protein ligase which accepts ubiquitin from E2 ubiquitin-conjugating enzymes ube2l3 and ube2l6 in the form of a thioester and then directly transfers the ubiquitin to targeted substrates. The chain is Probable E3 ubiquitin-protein ligase RNF144A-B (rnf144ab) from Danio rerio (Zebrafish).